A 70-amino-acid chain; its full sequence is Movement protein TGBp3 (70 aa).

Over 1–4 (MEVN) the chain is Lumenal. Residues 5–27 (TYLNAIILVLVVTIIAVISTSLV) traverse the membrane as a helical segment. The Cytoplasmic portion of the chain corresponds to 28–70 (RTEPCVIKITGESITVLACKLDAETIKAIADLKPLSVERLSFH).

The protein belongs to the Tymovirales TGBp3 protein family.

Its subcellular location is the host endoplasmic reticulum membrane. Plays a role in viral cell-to-cell propagation, by facilitating genome transport to neighboring plant cells through plasmosdesmata. May induce the formation of granular vesicles derived from the endoplasmic reticulum, which align on actin filaments. This is Movement protein TGBp3 from Brassica campestris (Field mustard).